The sequence spans 378 residues: Ribosomal RNA large subunit methyltransferase G (378 aa).

This sequence belongs to the methyltransferase superfamily. RlmG family.

It is found in the cytoplasm. It carries out the reaction guanosine(1835) in 23S rRNA + S-adenosyl-L-methionine = N(2)-methylguanosine(1835) in 23S rRNA + S-adenosyl-L-homocysteine + H(+). Specifically methylates the guanine in position 1835 (m2G1835) of 23S rRNA. The sequence is that of Ribosomal RNA large subunit methyltransferase G from Shewanella putrefaciens (strain CN-32 / ATCC BAA-453).